Consider the following 305-residue polypeptide: GMP synthase [glutamine-hydrolyzing] subunit B (305 aa).

The GMPS ATP-PPase domain maps to 2-184; the sequence is VKPEKFIPKA…LQLPEEICER (183 aa). Residue 29 to 35 participates in ATP binding; it reads SGGVDSS.

Heterodimer composed of a glutamine amidotransferase subunit (A) and a GMP-binding subunit (B).

The enzyme catalyses XMP + L-glutamine + ATP + H2O = GMP + L-glutamate + AMP + diphosphate + 2 H(+). It functions in the pathway purine metabolism; GMP biosynthesis; GMP from XMP (L-Gln route): step 1/1. In terms of biological role, catalyzes the synthesis of GMP from XMP. This is GMP synthase [glutamine-hydrolyzing] subunit B (guaAB) from Methanosarcina acetivorans (strain ATCC 35395 / DSM 2834 / JCM 12185 / C2A).